The chain runs to 182 residues: Large ribosomal subunit protein uL16 (182 aa).

The protein belongs to the universal ribosomal protein uL16 family.

In Thermococcus onnurineus (strain NA1), this protein is Large ribosomal subunit protein uL16.